A 356-amino-acid chain; its full sequence is Probable methyltransferase-like protein 15 homolog (356 aa).

Residues 55-57, Asp-74, Phe-103, Asp-126, and Gln-133 contribute to the S-adenosyl-L-methionine site; that span reads GGH.

Belongs to the methyltransferase superfamily. RsmH family.

Probable S-adenosyl-L-methionine-dependent methyltransferase. In Drosophila melanogaster (Fruit fly), this protein is Probable methyltransferase-like protein 15 homolog.